The chain runs to 431 residues: Tol-Pal system protein TolB (431 aa).

The signal sequence occupies residues 1 to 26; sequence MSLMTKLGFRALVASCLITAGSAANA. Residues 406-431 are disordered; it reads DGSAPPQILSVQGGSVREPSWGPFMQ.

It belongs to the TolB family. The Tol-Pal system is composed of five core proteins: the inner membrane proteins TolA, TolQ and TolR, the periplasmic protein TolB and the outer membrane protein Pal. They form a network linking the inner and outer membranes and the peptidoglycan layer.

It localises to the periplasm. In terms of biological role, part of the Tol-Pal system, which plays a role in outer membrane invagination during cell division and is important for maintaining outer membrane integrity. This chain is Tol-Pal system protein TolB, found in Burkholderia orbicola (strain AU 1054).